Here is a 152-residue protein sequence, read N- to C-terminus: UPF0735 ACT domain-containing protein CTC_00116 (152 aa).

Positions 76-151 constitute an ACT domain; it reads IISVTLNHRP…NVIKLDLIAM (76 aa).

This sequence belongs to the UPF0735 family.

The polypeptide is UPF0735 ACT domain-containing protein CTC_00116 (Clostridium tetani (strain Massachusetts / E88)).